The primary structure comprises 136 residues: Small ribosomal subunit protein uS19 (136 aa).

The protein belongs to the universal ribosomal protein uS19 family.

Its function is as follows. Protein S19 forms a complex with S13 that binds strongly to the 16S ribosomal RNA. The protein is Small ribosomal subunit protein uS19 of Methanosarcina mazei (strain ATCC BAA-159 / DSM 3647 / Goe1 / Go1 / JCM 11833 / OCM 88) (Methanosarcina frisia).